The sequence spans 215 residues: Peptidyl-tRNA hydrolase (215 aa).

A tRNA-binding site is contributed by tyrosine 35. Catalysis depends on histidine 40, which acts as the Proton acceptor. Positions 86, 88, and 134 each coordinate tRNA.

This sequence belongs to the PTH family. In terms of assembly, monomer.

The protein resides in the cytoplasm. It carries out the reaction an N-acyl-L-alpha-aminoacyl-tRNA + H2O = an N-acyl-L-amino acid + a tRNA + H(+). Hydrolyzes ribosome-free peptidyl-tRNAs (with 1 or more amino acids incorporated), which drop off the ribosome during protein synthesis, or as a result of ribosome stalling. Its function is as follows. Catalyzes the release of premature peptidyl moieties from peptidyl-tRNA molecules trapped in stalled 50S ribosomal subunits, and thus maintains levels of free tRNAs and 50S ribosomes. This Bordetella parapertussis (strain 12822 / ATCC BAA-587 / NCTC 13253) protein is Peptidyl-tRNA hydrolase.